The sequence spans 391 residues: MSILNMQDLELQGKRVLIREDLNVPVSDGVVTSDARLRASLPTIKLALEKGAAVMVMSHLGRPTEGEFNAEFSMQPVVNYLAKALDCPVRLASEYLDGVDVAVGEVVVFENVRFNVGEKKNDEALAKKMAALCDVYVMDAFGTAHRAQASTHGVGLHAPIACAGPLLAGELAALGKALDNPARPMVAIVGGSKVSTKLTVLESLSTKVDQLVVGGGIANTFVAAAGHNVGKSLYEADLIDEAKRLVAAAQSGGGDIPVPTDVVVAGEFSPTATATLKDVSAVSDTDMIFDIGPDSAEALAEIIKNAGTVVWNGPVGVFEFDQFGEGTKRIAQAIADSNAFSIAGGGDTLAAVDKYDIADKVSYISTGGGAFLEFLEGKELPAVAMLESRAQ.

Substrate is bound by residues 21-23, arginine 36, 59-62, arginine 113, and arginine 146; these read DLN and HLGR. Residues lysine 197, glutamate 319, and 345–348 each bind ATP; that span reads GGDT.

It belongs to the phosphoglycerate kinase family. In terms of assembly, monomer.

It is found in the cytoplasm. It catalyses the reaction (2R)-3-phosphoglycerate + ATP = (2R)-3-phospho-glyceroyl phosphate + ADP. It functions in the pathway carbohydrate degradation; glycolysis; pyruvate from D-glyceraldehyde 3-phosphate: step 2/5. The polypeptide is Phosphoglycerate kinase (Shewanella piezotolerans (strain WP3 / JCM 13877)).